A 616-amino-acid chain; its full sequence is Probable methyltransferase PMT2 (616 aa).

The Cytoplasmic segment spans residues 1-13 (MALKSSSADGKTR). A helical; Signal-anchor for type II membrane protein membrane pass occupies residues 14–34 (SSVQIFIVFSLCCFFYILGAW). Over 35 to 616 (QRSGFGKGDS…YWVTNSTSTH (582 aa)) the chain is Lumenal. Residues N205 and N611 are each glycosylated (N-linked (GlcNAc...) asparagine).

It belongs to the methyltransferase superfamily.

It localises to the golgi apparatus membrane. This Arabidopsis thaliana (Mouse-ear cress) protein is Probable methyltransferase PMT2.